The chain runs to 118 residues: Large ribosomal subunit protein uL18 (118 aa).

The tract at residues 1–24 (MISKPDKNKTRQRRHARVRGKISG) is disordered. Basic residues predominate over residues 10 to 20 (TRQRRHARVRG).

This sequence belongs to the universal ribosomal protein uL18 family. In terms of assembly, part of the 50S ribosomal subunit; part of the 5S rRNA/L5/L18/L25 subcomplex. Contacts the 5S and 23S rRNAs.

In terms of biological role, this is one of the proteins that bind and probably mediate the attachment of the 5S RNA into the large ribosomal subunit, where it forms part of the central protuberance. In Lactiplantibacillus plantarum (strain ATCC BAA-793 / NCIMB 8826 / WCFS1) (Lactobacillus plantarum), this protein is Large ribosomal subunit protein uL18.